A 401-amino-acid polypeptide reads, in one-letter code: Bifunctional sugar-1-phosphate nucleotidylyltransferase/acetyltransferase (401 aa).

The interval 1 to 220 (MKAFILAAGS…KPWNIIDVNK (220 aa)) is nucleotidylyltransferase. A ribonucleoside 5'-triphosphate contacts are provided by residues 8 to 13 (AGSGER), Gln73, and Gly79. N-acetyl-alpha-D-glucosamine 1-phosphate-binding residues include Thr80, Tyr97, Gly131, Glu146, and Asn157. The interval 236-401 (EDNVKIKGKV…DVGYGEFFKV (166 aa)) is acetyltransferase.

It in the N-terminal section; belongs to the N-acetylglucosamine-1-phosphate uridyltransferase family. The protein in the C-terminal section; belongs to the transferase hexapeptide repeat family. In terms of assembly, homotrimer. The cofactor is Co(2+). It depends on Mn(2+) as a cofactor.

The catalysed reaction is dTTP + alpha-D-glucose 1-phosphate + H(+) = dTDP-alpha-D-glucose + diphosphate. It carries out the reaction alpha-D-glucose 1-phosphate + UTP + H(+) = UDP-alpha-D-glucose + diphosphate. It catalyses the reaction N-acetyl-alpha-D-galactosamine 1-phosphate + UTP + H(+) = UDP-N-acetyl-alpha-D-galactosamine + diphosphate. The enzyme catalyses N-acetyl-alpha-D-glucosamine 1-phosphate + UTP + H(+) = UDP-N-acetyl-alpha-D-glucosamine + diphosphate. The catalysed reaction is alpha-D-galactosamine 1-phosphate + acetyl-CoA = N-acetyl-alpha-D-galactosamine 1-phosphate + CoA + H(+). It carries out the reaction alpha-D-glucosamine 1-phosphate + acetyl-CoA = N-acetyl-alpha-D-glucosamine 1-phosphate + CoA + H(+). The protein operates within nucleotide-sugar biosynthesis; UDP-N-acetyl-alpha-D-glucosamine biosynthesis; N-acetyl-alpha-D-glucosamine 1-phosphate from alpha-D-glucosamine 6-phosphate (route II): step 2/2. It functions in the pathway nucleotide-sugar biosynthesis; UDP-N-acetyl-alpha-D-glucosamine biosynthesis; UDP-N-acetyl-alpha-D-glucosamine from N-acetyl-alpha-D-glucosamine 1-phosphate: step 1/1. With respect to regulation, glcN-1-P acetyltransferase activity is inhibited by divalent cations. GalN-1-P acetyltransferase activity is enhanced by Co(2+), Mg(2+) and Ca(2+), but inhibited by Zn(2+) or Mn(2+). Functionally, bifunctional enzyme involved in the synthesis of UDP-N-acetylglucosamine (UDP-GlcNAc) and UDP-N-acetylgalactosamine (UDP-GalNAc). It has multiple amino-sugar-1-phosphate acetyltransferase activities, including glucosamine-1-phosphate (GlcN-1-P) acetyltransferase and galactosamine-1-phosphate (GalN-1-P) acetyltransferase activities, and multiple sugar-1-phosphate nucleotidylyltransferase activities, including N-acetylglucosamine-1-phosphate (GlcNAc-1-P) uridyltransferase and N-acetylgalactosamine-1-phosphate (GalNAc-1-P) uridyltransferase activities. Also catalyzes the formation of dTDP-glucose from dTTP and glucose-1-phosphate (Glc-1-P), and the reverse reaction, which produces dTTP from dTDP-glucose and diphosphate. Can also catalyze the formation of UDP-glucose from UTP and glucose-1-phosphate. The protein is Bifunctional sugar-1-phosphate nucleotidylyltransferase/acetyltransferase of Sulfurisphaera tokodaii (strain DSM 16993 / JCM 10545 / NBRC 100140 / 7) (Sulfolobus tokodaii).